The chain runs to 384 residues: Chaperone protein DnaJ (384 aa).

The J domain occupies 5 to 69 (DYYKVLGVDR…QKRAQYDQFG (65 aa)). A CR-type zinc finger spans residues 141–223 (GKKTQVSYTR…CGGKGTVERK (83 aa)). 8 residues coordinate Zn(2+): Cys154, Cys157, Cys171, Cys174, Cys197, Cys200, Cys211, and Cys214. CXXCXGXG motif repeat units lie at residues 154-161 (CETCGGNG), 171-178 (CDKCHGTG), 197-204 (CDKCNGRG), and 211-218 (CKTCGGKG).

The protein belongs to the DnaJ family. In terms of assembly, homodimer. It depends on Zn(2+) as a cofactor.

The protein resides in the cytoplasm. Functionally, participates actively in the response to hyperosmotic and heat shock by preventing the aggregation of stress-denatured proteins and by disaggregating proteins, also in an autonomous, DnaK-independent fashion. Unfolded proteins bind initially to DnaJ; upon interaction with the DnaJ-bound protein, DnaK hydrolyzes its bound ATP, resulting in the formation of a stable complex. GrpE releases ADP from DnaK; ATP binding to DnaK triggers the release of the substrate protein, thus completing the reaction cycle. Several rounds of ATP-dependent interactions between DnaJ, DnaK and GrpE are required for fully efficient folding. Also involved, together with DnaK and GrpE, in the DNA replication of plasmids through activation of initiation proteins. This chain is Chaperone protein DnaJ, found in Lactobacillus acidophilus (strain ATCC 700396 / NCK56 / N2 / NCFM).